A 265-amino-acid chain; its full sequence is Protein Msed_2121 (265 aa).

The protein belongs to the CinA family.

The polypeptide is Protein Msed_2121 (Metallosphaera sedula (strain ATCC 51363 / DSM 5348 / JCM 9185 / NBRC 15509 / TH2)).